A 319-amino-acid polypeptide reads, in one-letter code: Biotin synthase (319 aa).

The Radical SAM core domain maps to 41–267 (YKGNKVKVCS…TPDIMICGGR (227 aa)). The [4Fe-4S] cluster site is built by cysteine 59, cysteine 63, and cysteine 66. [2Fe-2S] cluster is bound at residue cysteine 192.

The protein belongs to the radical SAM superfamily. Biotin synthase family. Homodimer. It depends on [4Fe-4S] cluster as a cofactor. The cofactor is [2Fe-2S] cluster.

It catalyses the reaction (4R,5S)-dethiobiotin + (sulfur carrier)-SH + 2 reduced [2Fe-2S]-[ferredoxin] + 2 S-adenosyl-L-methionine = (sulfur carrier)-H + biotin + 2 5'-deoxyadenosine + 2 L-methionine + 2 oxidized [2Fe-2S]-[ferredoxin]. It participates in cofactor biosynthesis; biotin biosynthesis; biotin from 7,8-diaminononanoate: step 2/2. Catalyzes the conversion of dethiobiotin (DTB) to biotin by the insertion of a sulfur atom into dethiobiotin via a radical-based mechanism. The chain is Biotin synthase from Endomicrobium trichonymphae.